An 81-amino-acid chain; its full sequence is Small ribosomal subunit protein uS17 (81 aa).

Belongs to the universal ribosomal protein uS17 family. As to quaternary structure, part of the 30S ribosomal subunit.

One of the primary rRNA binding proteins, it binds specifically to the 5'-end of 16S ribosomal RNA. The chain is Small ribosomal subunit protein uS17 from Trichormus variabilis (strain ATCC 29413 / PCC 7937) (Anabaena variabilis).